Here is a 448-residue protein sequence, read N- to C-terminus: Integrator complex subunit 15 (448 aa).

The protein belongs to the Integrator subunit 15 family. As to quaternary structure, component of the Integrator complex, composed of core subunits INTS1, INTS2, INTS3, INTS4, INTS5, INTS6, INTS7, INTS8, INTS9/RC74, INTS10, INTS11/CPSF3L, INTS12, INTS13, INTS14 and INTS15. The core complex associates with protein phosphatase 2A subunits PPP2CA and PPP2R1A, to form the Integrator-PP2A (INTAC) complex. INTS15 is part of the tail subcomplex, composed of INTS10, INTS13, INTS14 and INTS15.

It localises to the nucleus. Its subcellular location is the chromosome. Its function is as follows. Component of the integrator complex, a multiprotein complex that terminates RNA polymerase II (Pol II) transcription in the promoter-proximal region of genes. The integrator complex provides a quality checkpoint during transcription elongation by driving premature transcription termination of transcripts that are unfavorably configured for transcriptional elongation: the complex terminates transcription by (1) catalyzing dephosphorylation of the C-terminal domain (CTD) of Pol II subunit POLR2A/RPB1 and SUPT5H/SPT5, (2) degrading the exiting nascent RNA transcript via endonuclease activity and (3) promoting the release of Pol II from bound DNA. The integrator complex is also involved in terminating the synthesis of non-coding Pol II transcripts, such as enhancer RNAs (eRNAs), small nuclear RNAs (snRNAs), telomerase RNAs and long non-coding RNAs (lncRNAs). INTS15 is part of the integrator tail module that acts as a platform for the recruitment of transcription factors at promoters. Within the integrator complex, INTS15 is required to bridge different integrator modules. The chain is Integrator complex subunit 15 from Mus musculus (Mouse).